We begin with the raw amino-acid sequence, 233 residues long: Probable dihydroorotate dehydrogenase B (NAD(+)), electron transfer subunit (233 aa).

Positions 1–87 constitute an FAD-binding FR-type domain; it reads MYRVVTIEEV…RGPYGHGFIK (87 aa). [2Fe-2S] cluster is bound by residues Cys-202, Cys-207, Cys-210, and Cys-218.

It belongs to the PyrK family. Heterotetramer of 2 PyrK and 2 PyrD type B subunits. [2Fe-2S] cluster is required as a cofactor. FAD serves as cofactor.

It participates in pyrimidine metabolism; UMP biosynthesis via de novo pathway; orotate from (S)-dihydroorotate (NAD(+) route): step 1/1. Responsible for channeling the electrons from the oxidation of dihydroorotate from the FMN redox center in the PyrD type B subunit to the ultimate electron acceptor NAD(+). The protein is Probable dihydroorotate dehydrogenase B (NAD(+)), electron transfer subunit of Thermococcus kodakarensis (strain ATCC BAA-918 / JCM 12380 / KOD1) (Pyrococcus kodakaraensis (strain KOD1)).